Consider the following 195-residue polypeptide: MSKQEKSNVEDKSLDIETAAQVETAQESASGALEELSVEEQLERAKDTIKELEDSCDQFKDEALRAKAEMENIRKRAERDVSNARKFGIEKFAKELLPVIDSIEQALKHEVKLEEAIAMKEGIELTAKMLVDILKKNGVEELDPKGEKFDPNLHEAMAMIPNPEFEDNTIFDVFQKGYMLNGRIVRAAKVVIVKN.

This sequence belongs to the GrpE family. In terms of assembly, homodimer.

It localises to the cytoplasm. In terms of biological role, participates actively in the response to hyperosmotic and heat shock by preventing the aggregation of stress-denatured proteins, in association with DnaK and GrpE. It is the nucleotide exchange factor for DnaK and may function as a thermosensor. Unfolded proteins bind initially to DnaJ; upon interaction with the DnaJ-bound protein, DnaK hydrolyzes its bound ATP, resulting in the formation of a stable complex. GrpE releases ADP from DnaK; ATP binding to DnaK triggers the release of the substrate protein, thus completing the reaction cycle. Several rounds of ATP-dependent interactions between DnaJ, DnaK and GrpE are required for fully efficient folding. This is Protein GrpE from Francisella tularensis subsp. holarctica (strain FTNF002-00 / FTA).